Reading from the N-terminus, the 302-residue chain is 4-hydroxy-tetrahydrodipicolinate synthase (302 aa).

Position 55 (Thr55) interacts with pyruvate. Tyr144 (proton donor/acceptor) is an active-site residue. Catalysis depends on Lys172, which acts as the Schiff-base intermediate with substrate. Val214 is a pyruvate binding site.

The protein belongs to the DapA family. Homotetramer; dimer of dimers.

It localises to the cytoplasm. The catalysed reaction is L-aspartate 4-semialdehyde + pyruvate = (2S,4S)-4-hydroxy-2,3,4,5-tetrahydrodipicolinate + H2O + H(+). It participates in amino-acid biosynthesis; L-lysine biosynthesis via DAP pathway; (S)-tetrahydrodipicolinate from L-aspartate: step 3/4. Its function is as follows. Catalyzes the condensation of (S)-aspartate-beta-semialdehyde [(S)-ASA] and pyruvate to 4-hydroxy-tetrahydrodipicolinate (HTPA). The protein is 4-hydroxy-tetrahydrodipicolinate synthase of Prochlorococcus marinus (strain MIT 9211).